Here is a 198-residue protein sequence, read N- to C-terminus: Superoxide dismutase [Fe] (198 aa).

Positions 27, 74, 157, and 161 each coordinate Fe(3+).

The protein belongs to the iron/manganese superoxide dismutase family. In terms of assembly, homodimer. Fe(3+) is required as a cofactor.

The catalysed reaction is 2 superoxide + 2 H(+) = H2O2 + O2. Its function is as follows. Destroys superoxide anion radicals which are normally produced within the cells and which are toxic to biological systems. The polypeptide is Superoxide dismutase [Fe] (sodB) (Pseudomonas putida (Arthrobacter siderocapsulatus)).